The following is an 820-amino-acid chain: MSNNTEYTPVLRQYRALKEQYGECLLLYRLGDFYELFFEDAVIASKTLNIVLTKRGTDTPMCGVPYHSSESYIGRLVKSGYKVAVCEQIETAEEARKRSVRALVRREVTRIVTPGTLVEDSLLDAKENNYLACISNIGERYGVAWMELSTGLFHVRASKLEDLDSEIQRLGPSELLISDKLKEQQSMELVLKRHRCAITSHNESFFDSKRAEKVLCGVYGVTTVQGLGDFEEVEVSACGSLLEYVRMTQRGSLPKLSYPKVRDSNSFVLIDGPALRNLELFSTQSGEKKGSLISTIDHTVTAMGSRMLKRYLAFPVACHNVINGRQDAVEFFVSNRSLCEVIRGVINGFPDIERILTRVKFSKCSPKDIHLLGRALSKIFELSRIISRSTHAIISKILVSLGDHRDLLKLISEVMLENNATITKDGGFINPGCNERLAELARIQNDSGVLIQRLRDKYRALTGISSLKILSNNLLGYYIEVSSSYKVSDESFVRRQSLANSTRYTTAELKELEERIVSAQSESADLEAQIFKGLCSRIADECQDIGLAAEAVAELDVLTTLAEVAVENNYVRPIVDDSKQFKIVRGRHPVVEVGTDFIANDCDLSEGNSMSLITGPNMAGKSTFLRQNALIAVLAHIGSFVPAEHAHIGVIDKIFSRVGASDNIALGHSTFMVEMVETAAILNQATSKSLVILDEIGRGTAINDGLSIALAAIEHIHDVTKSRAICATHYHELPKLSSHFENIRFFCLRIEEWKGEVVFLHELIPGISSRSYGIHVAGLAGFPKGALERAKFFMSKFDEAEHYRSIDSIDITSGRHITDE.

An ATP-binding site is contributed by 615–622 (GPNMAGKS).

This sequence belongs to the DNA mismatch repair MutS family.

Functionally, this protein is involved in the repair of mismatches in DNA. It is possible that it carries out the mismatch recognition step. This protein has a weak ATPase activity. This chain is DNA mismatch repair protein MutS, found in Anaplasma phagocytophilum (strain HZ).